Consider the following 198-residue polypeptide: Suppressor of cytokine signaling 2 (198 aa).

The disordered stretch occupies residues 1-29; the sequence is MTLRCLEPSGNGADRTRSQWGTAGLPEEQ. The interval 1 to 75 is interaction with AREL1; sequence MTLRCLEPSG…PEGTFLIRDS (75 aa). Ser30 is modified (phosphoserine). One can recognise an SH2 domain in the interval 48–156; sequence WYWGSMTVNE…TVHLYLTKPL (109 aa). Residue Ser52 is modified to Phosphoserine; by PKC. The 47-residue stretch at 151–197 folds into the SOCS box domain; sequence YLTKPLYTSAPTLQHFCRLAINKCTGTIWGLPLPTRLKDYLEEYKFQ. Lys173 is covalently cross-linked (Glycyl lysine isopeptide (Lys-Gly) (interchain with G-Cter in ubiquitin)).

In terms of assembly, substrate-recognition component of the ECS(SOCS2) complex, composed of SOCS2, CUL5, ELOB, ELOC and RNF7/RBX2. Interacts with IGF1R. Interacts with DCUN1D1. Post-translationally, ubiquitinated; mediated by AREL1 and leading to its subsequent proteasomal degradation. Ubiquitination is dependent on phosphorylation at Ser-52, by PKC and is stimulated by LPS. In terms of processing, phosphorylation at Ser-52 by PKC facilitates its ubiquitination and proteasomal degradation. As to expression, expressed primarily in the testis, some expression in liver and lung.

Its subcellular location is the cytoplasm. It functions in the pathway protein modification; protein ubiquitination. Substrate-recognition component of a cullin-5-RING E3 ubiquitin-protein ligase complex (ECS complex, also named CRL5 complex), which mediates the ubiquitination and subsequent proteasomal degradation of target proteins, such as EPOR and GHR. Specifically recognizes and binds phosphorylated proteins via its SH2 domain, promoting their ubiquitination. The ECS(SOCS2) complex acts as a key regulator of growth hormone receptor (GHR) levels by mediating ubiquitination and degradation of GHR, following GHR phosphorylation by JAK2. The ECS(SOCS2) also catalyzes ubiquitination and degradation of JAK2-phosphorylated EPOR. The polypeptide is Suppressor of cytokine signaling 2 (Mus musculus (Mouse)).